The primary structure comprises 45 residues: Protamine Z2 (45 aa).

The segment covering 1-23 (MKCGRKRRRRRRHACKRKKRACK) has biased composition (basic residues). The segment at 1–26 (MKCGRKRRRRRRHACKRKKRACKQRS) is disordered.

Testis.

It is found in the nucleus. The protein localises to the chromosome. In terms of biological role, protamines substitute for histones in the chromatin of sperm during the haploid phase of spermatogenesis. They compact sperm DNA into a highly condensed, stable and inactive complex. The protein is Protamine Z2 of Scyliorhinus canicula (Small-spotted catshark).